The chain runs to 553 residues: Formate--tetrahydrofolate ligase (553 aa).

Residue 64–71 (TPAGEGKT) coordinates ATP.

This sequence belongs to the formate--tetrahydrofolate ligase family.

It carries out the reaction (6S)-5,6,7,8-tetrahydrofolate + formate + ATP = (6R)-10-formyltetrahydrofolate + ADP + phosphate. It participates in one-carbon metabolism; tetrahydrofolate interconversion. This is Formate--tetrahydrofolate ligase from Pseudothermotoga lettingae (strain ATCC BAA-301 / DSM 14385 / NBRC 107922 / TMO) (Thermotoga lettingae).